We begin with the raw amino-acid sequence, 348 residues long: tRNA N6-adenosine threonylcarbamoyltransferase (348 aa).

Residues H111 and H115 each coordinate Fe cation. Substrate-binding positions include 134–138 (LISGG), D167, G180, and N277. D305 lines the Fe cation pocket.

It belongs to the KAE1 / TsaD family. Requires Fe(2+) as cofactor.

It is found in the cytoplasm. It catalyses the reaction L-threonylcarbamoyladenylate + adenosine(37) in tRNA = N(6)-L-threonylcarbamoyladenosine(37) in tRNA + AMP + H(+). Required for the formation of a threonylcarbamoyl group on adenosine at position 37 (t(6)A37) in tRNAs that read codons beginning with adenine. Is involved in the transfer of the threonylcarbamoyl moiety of threonylcarbamoyl-AMP (TC-AMP) to the N6 group of A37, together with TsaE and TsaB. TsaD likely plays a direct catalytic role in this reaction. The protein is tRNA N6-adenosine threonylcarbamoyltransferase of Haemophilus ducreyi (strain 35000HP / ATCC 700724).